Here is a 673-residue protein sequence, read N- to C-terminus: MLHGGDYNPDQWLDRPDILADDIKLMKLAHTNTFSVGIFSWSALEPEEGVYTFEWLDDIFESIHRNGGRIILATPSGARPAWLSQKYPEVLRVNAERVKQLHGGRHNHCFTSYVYREKTKEINRMLAERYGSQHALLMWHVSNEYGGECHCDQCQHAFRDWLKKKYNHDIKSLNDAWWTPFWSHTFNDWSQIESPSPIGENAVHGLNLDWRRFVTDQTISFFQNEIVPLKEITPNIPITTNFMADTHDLIPFQGLDYSKFAKHLDVISWDAYPAWHNDWESTADLAMKVGFINDLYRSLKQQPFLLMESTPSAVNWHDFNKAKRPGMHLLSSVQMIAHGSDSILYFQWRKSRGSSEKFHGAVVGHDNCSENRVFKEVAKVGQTLEALSEVTGTIRPADVAILYDWENHWALQDAQGFGMKTKRYPQTLHEHYRAFWERDIPVDVITKEQDFSSYRLLIVPMLYLASEETIARLKAFAANGGTLVMTYISGIVNESDLTYLGGWPKDLQEMFGMEPVETDTLYPGDKNAVRYQNRSYELKDYATVLKLSTADPEGFYEDDFYADTTAVTSHPYKQGKTYYIGARLSSQFHRDFYGTLIKELAIQPALDVKHQPGVSVQVRQDEENDYIFIMNFTEKRQPVVLASAVKDMLTGETLAGEVTLEKYEARIAVKAKE.

Position 105 (Arg105) interacts with substrate. Residue Cys109 coordinates Zn(2+). A substrate-binding site is contributed by Asn143. The active-site Proton donor is the Glu144. Positions 149, 151, and 154 each coordinate Zn(2+). The active-site Nucleophile is the Glu308. Residues Trp316 and 356 to 359 (EKFH) each bind substrate.

This sequence belongs to the glycosyl hydrolase 42 family. In terms of assembly, homodimer.

It carries out the reaction Hydrolysis of terminal non-reducing beta-D-galactose residues in beta-D-galactosides.. Inhibited by hydrolysis end products D-galactose and D-glucose. The hydrolysis of o-nitrophenyl-beta-D-galactopyranoside (ONPG) is slightly activated by monovalent ions, Na(+) and K(+). Concentrations of these ions in the range of 1-100 mM exert the stimulating effects. The presence of 1 mM Mn(2+) together with the presence of 10 mM Na(+) slightly stimulates the activity, while presence of 10 mM Mn(2+) inhibits the activity by about 40%. Catalyzes the hydrolysis of lactose to its constituent monosaccharides glucose and galactose. Possesses a low level of transgalactosylation activity for the production of galacto-oligosaccharides (GOS) from lactose. The sequence is that of Beta-galactosidase GalA from Bacillus licheniformis (strain ATCC 14580 / DSM 13 / JCM 2505 / CCUG 7422 / NBRC 12200 / NCIMB 9375 / NCTC 10341 / NRRL NRS-1264 / Gibson 46).